A 398-amino-acid polypeptide reads, in one-letter code: Autophagy-related protein 39 (398 aa).

The short motif at 8–11 (WNLV) is the ATG8-binding element. The tract at residues 15–50 (RLRKGREGEEQSSKSEISLDSLHESSFAGEDDEDFD) is disordered. An ATG11-binding motif is present at residues 52-59 (DVLSNTSS). The chain crosses the membrane as a helical span at residues 148-164 (VIMLSSLLSMTFSYLAL).

In terms of assembly, interacts with ATG8 and ATG11.

It localises to the endoplasmic reticulum membrane. Its subcellular location is the preautophagosomal structure membrane. Its function is as follows. Acts as a receptor for reticulophagy and nucleophagy. Directs autophagic sequestration of double-membrane vesicles derived from the nuclear envelope and perinuclear endoplasmic reticulum (pnER) into autophagosomes. Is not required for the cytoplasm-to-vacuole targeting pathway, mitophagy, pexophagy, and non-selective autophagy. This chain is Autophagy-related protein 39, found in Saccharomyces cerevisiae (strain ATCC 204508 / S288c) (Baker's yeast).